The sequence spans 449 residues: Probable secreted beta-glucosidase ARB_04747 (449 aa).

An N-terminal signal peptide occupies residues 1–21 (MKFSSGILSLAVAASVQSVQA). Residue asparagine 57 is glycosylated (N-linked (GlcNAc...) asparagine). The interval 96-185 (SPPACPAPSY…RPFPDGEIDC (90 aa)) is disordered. The span at 98-125 (PACPAPSYVPSPPAAPSSPPAAPQPPSK) shows a compositional bias: pro residues. Over residues 131-150 (EEPKKPEEPKKPEGPKKPEG) the composition is skewed to basic and acidic residues.

Belongs to the SUN family.

It localises to the secreted. The protein localises to the cell wall. Functionally, cell surface beta-glucosidase involved in cytokinesis, cell wall biogenesis, adhesion to host tissue; thus playing an important role in the host-pathogen interaction. Has hydrolytic activity on linear (1-&gt;3)-beta-D-glucans such as laminaribiose and other laminarioligosaccharides. In Arthroderma benhamiae (strain ATCC MYA-4681 / CBS 112371) (Trichophyton mentagrophytes), this protein is Probable secreted beta-glucosidase ARB_04747.